We begin with the raw amino-acid sequence, 232 residues long: Ubiquinone biosynthesis O-methyltransferase (232 aa).

The S-adenosyl-L-methionine site is built by Arg-36, Gly-55, Asp-76, and Leu-120.

This sequence belongs to the methyltransferase superfamily. UbiG/COQ3 family.

The enzyme catalyses a 3-demethylubiquinol + S-adenosyl-L-methionine = a ubiquinol + S-adenosyl-L-homocysteine + H(+). It carries out the reaction a 3-(all-trans-polyprenyl)benzene-1,2-diol + S-adenosyl-L-methionine = a 2-methoxy-6-(all-trans-polyprenyl)phenol + S-adenosyl-L-homocysteine + H(+). It participates in cofactor biosynthesis; ubiquinone biosynthesis. Functionally, O-methyltransferase that catalyzes the 2 O-methylation steps in the ubiquinone biosynthetic pathway. The chain is Ubiquinone biosynthesis O-methyltransferase from Pseudomonas aeruginosa (strain ATCC 15692 / DSM 22644 / CIP 104116 / JCM 14847 / LMG 12228 / 1C / PRS 101 / PAO1).